The following is a 154-amino-acid chain: Deoxyuridine 5'-triphosphate nucleotidohydrolase (154 aa).

Residues 64–66 (RSG), Asn77, 81–83 (TID), and Lys91 contribute to the substrate site.

It belongs to the dUTPase family. As to quaternary structure, homotrimer. Mg(2+) is required as a cofactor.

The enzyme catalyses dUTP + H2O = dUMP + diphosphate + H(+). It functions in the pathway pyrimidine metabolism; dUMP biosynthesis; dUMP from dCTP (dUTP route): step 2/2. In terms of biological role, this enzyme is involved in nucleotide metabolism: it produces dUMP, the immediate precursor of thymidine nucleotides and it decreases the intracellular concentration of dUTP so that uracil cannot be incorporated into DNA. In Mycobacterium marinum (strain ATCC BAA-535 / M), this protein is Deoxyuridine 5'-triphosphate nucleotidohydrolase.